A 623-amino-acid polypeptide reads, in one-letter code: Immunity-related GTPase family Q protein (623 aa).

Residues C152 and C158 are joined by a disulfide bond. Residues 155 to 180 (SDGCEELERLRAALQSQAEALRRLLP) are a coiled coil. The short motif at 186 to 189 (FEVL) is the LIR 1 element. The residue at position 203 (T203) is a Phosphothreonine. Positions 223–449 (ARLDLAVAGK…PGLCEWLRRA (227 aa)) constitute an IRG-type G domain. The disordered stretch occupies residues 334 to 393 (EGEDPECLGEGKMENPKGESLKNAGGGGLENALSKGREKCSAGSQKAGSGEGPGKAGSEG). A compositionally biased stretch (basic and acidic residues) spans 342-353 (GEGKMENPKGES). Positions 421 to 424 (WEVL) match the LIR 2 motif.

The protein belongs to the TRAFAC class dynamin-like GTPase superfamily. IRG family. Interacts (via LIR motif 1) with GABARAPL2. Interacts (via LIR motif 2) with MAP1LC3B/LC3B.

The protein resides in the lysosome. The protein localises to the cytoplasmic vesicle. It localises to the autophagosome. In terms of biological role, autophagy receptor that specifically promotes clearance of misfolded MHC class I molecules by targeting them to the lysosome for degradation. Acts as a molecular adapter that specifically recognizes and binds (1) misfolded MHC class I molecules following their ubiquitination, as well as (2) autophagy-related proteins, promoting the recruitment of misfolded MHC class I molecules to autophagy machinery for degradation. Degradation of misfolded MHC class I molecules is essential to prevent accumulation of defective MHC class I complexes at the surface of CD8(+) T-cells and prevent a stronger T-cell-mediated response. In contrast to other members of the family, does not show GTPase activity. The chain is Immunity-related GTPase family Q protein from Homo sapiens (Human).